We begin with the raw amino-acid sequence, 514 residues long: Anthranilate synthase component 1 (514 aa).

L-tryptophan contacts are provided by residues T40 and P291–M293. Chorismate is bound at residue G328–T329. Residue E361 coordinates Mg(2+). Chorismate-binding positions include Y449, R469, G482–G484, and G484. E497 contacts Mg(2+).

The protein belongs to the anthranilate synthase component I family. Heterotetramer consisting of two non-identical subunits: a beta subunit (TrpG) and a large alpha subunit (TrpE). Mg(2+) serves as cofactor.

It catalyses the reaction chorismate + L-glutamine = anthranilate + pyruvate + L-glutamate + H(+). The protein operates within amino-acid biosynthesis; L-tryptophan biosynthesis; L-tryptophan from chorismate: step 1/5. With respect to regulation, feedback inhibited by tryptophan. Its function is as follows. Part of a heterotetrameric complex that catalyzes the two-step biosynthesis of anthranilate, an intermediate in the biosynthesis of L-tryptophan. In the first step, the glutamine-binding beta subunit (TrpG) of anthranilate synthase (AS) provides the glutamine amidotransferase activity which generates ammonia as a substrate that, along with chorismate, is used in the second step, catalyzed by the large alpha subunit of AS (TrpE) to produce anthranilate. In the absence of TrpG, TrpE can synthesize anthranilate directly from chorismate and high concentrations of ammonia. The sequence is that of Anthranilate synthase component 1 (trpE) from Buchnera aphidicola subsp. Rhopalosiphum maidis.